We begin with the raw amino-acid sequence, 552 residues long: MKIRFMMLFGLLTLPVLAWAADALTGDVQRQPLNIQAIVMFLLFVGGTLYITYWASKKTRSRSDYYTAGGNITGFQNGLAIAGDYMSAASFLGISALVYTSGYDGLIYSLGFLVGWPIILFLIAERLRNLGRYTFADVASYRLQQRPIRSLSACGSLVVVALYLIAQMVGAGKLIELLFGLNYHVAVILVGILMVMYVMFGGMLATTWVQIIKAVLLLFGATFMAVMVMKSVGFSFDALFKQAMAVHPKGASIMSPGGLVSDPISALSLGLGLMFGTAGLPHILMRFFTVSDAKEARKSVFYATGFMGYFYFLTFIIGFGAILLVSANPEFKDATGALIGGNNMAAVHLADAVGGDFFLGFISAVAFATILAVVAGLTLAGASAVSHDLYSNVIKKGKATERDELKVSKITVLVLGVVAISLGILFENQNIAFMVGLAFSIAASCNFPIIIISMYWSKLTTRGAMIGGWAGLLTAVILMILGPTIWVKILGHATPIYPYDYPALFSMLVAFIGIWFFSITDRSEAGQQERARFHAQFVRSQTGVGASKGSSH.

A run of 14 helical transmembrane segments spans residues 5 to 25, 35 to 55, 78 to 98, 105 to 125, 151 to 171, 185 to 205, 208 to 228, 264 to 284, 305 to 325, 357 to 377, 407 to 427, 431 to 451, 466 to 486, and 499 to 519; these read FMML…DALT, IQAI…TYWA, GLAI…SALV, GLIY…LIAE, LSAC…MVGA, VAVI…GMLA, WVQI…AVMV, ISAL…PHIL, GFMG…ILLV, FFLG…VAGL, VSKI…ILFE, IAFM…PIII, IGGW…PTIW, and YDYP…FFSI.

Belongs to the sodium:solute symporter (SSF) (TC 2.A.21) family.

The protein resides in the cell inner membrane. Transports acetate. This chain is Cation/acetate symporter ActP, found in Pectobacterium carotovorum subsp. carotovorum (strain PC1).